A 22-amino-acid polypeptide reads, in one-letter code: Caerin-3.4 (22 aa).

At Lys22 the chain carries Lysine amide.

As to expression, expressed by the skin parotoid and/or rostral glands.

It localises to the secreted. Its function is as follows. Antibacterial peptide, that adopts an alpha helical conformation which can disrupt bacterial membranes. Each caerin displays a different antimicrobial specificity. The chain is Caerin-3.4 from Ranoidea caerulea (Green tree frog).